The sequence spans 36 residues: Photosystem I reaction center subunit VIII (36 aa).

A helical membrane pass occupies residues 6-28 (FPSVLVPLVGLVFPAMAMASLSL).

The protein belongs to the PsaI family.

Its subcellular location is the plastid. The protein localises to the chloroplast thylakoid membrane. May help in the organization of the PsaL subunit. This is Photosystem I reaction center subunit VIII from Panax ginseng (Korean ginseng).